Reading from the N-terminus, the 307-residue chain is Elongation factor Ts (307 aa).

Positions 80 to 83 (TDFV) are involved in Mg(2+) ion dislocation from EF-Tu.

The protein belongs to the EF-Ts family.

It is found in the cytoplasm. Its function is as follows. Associates with the EF-Tu.GDP complex and induces the exchange of GDP to GTP. It remains bound to the aminoacyl-tRNA.EF-Tu.GTP complex up to the GTP hydrolysis stage on the ribosome. The sequence is that of Elongation factor Ts from Rhodopseudomonas palustris (strain BisA53).